The sequence spans 369 residues: Biglycan (369 aa).

Residues 1-16 form the signal peptide; the sequence is MWPLWLVASLLALSQA. A propeptide spanning residues 17–37 is cleaved from the precursor; the sequence is LPFEQKGFWDFTLDDGLPMLN. O-linked (Xyl...) (glycosaminoglycan) serine glycosylation is found at serine 42 and serine 48. 2 disulfides stabilise this stretch: cysteine 64–cysteine 70 and cysteine 68–cysteine 77. 12 LRR repeats span residues 83 to 103, 104 to 127, 128 to 151, 152 to 172, 173 to 196, 197 to 221, 222 to 242, 243 to 266, 267 to 290, 291 to 313, 314 to 343, and 344 to 369; these read KAVPKEISPDTMLLDLQNNDI, SELRADDFKGLHHLYALVLVNNKI, SKIHEKAFSPLRKLQKLYISKNHL, VEIPPNLPSSLVELRIHDNRI, RKVPKGVFSGLRNMNCIEMGGNPL, ENSGFEPGAFDGLKLNYLRISEAKL, TGIPKDLPETLNELHLDHNKI, QAIELEDLLRYSKLYRLGLGHNQI, RMIENGSLSFLPTLRELHLDNNKL, SRVPSGLPDLKLLQVVYLHTNNI, TKVGVNDFCPVGFGVKRAYYNGISLFNNPV, and PYWEVQPATFRCVTDRLAIQFGNYKK. N-linked (GlcNAc...) asparagine glycans are attached at residues asparagine 271 and asparagine 312. Cysteine 322 and cysteine 355 are disulfide-bonded.

Belongs to the small leucine-rich proteoglycan (SLRP) family. SLRP class I subfamily. As to quaternary structure, homodimer. Forms a ternary complex with MFAP2 and ELN. Post-translationally, the two attached glycosaminoglycan chains can be either chondroitin sulfate or dermatan sulfate.

The protein localises to the secreted. Its subcellular location is the extracellular space. The protein resides in the extracellular matrix. Its function is as follows. May be involved in collagen fiber assembly. The polypeptide is Biglycan (BGN) (Canis lupus familiaris (Dog)).